A 269-amino-acid polypeptide reads, in one-letter code: MKI67 FHA domain-interacting nucleolar phosphoprotein (269 aa).

Positions 45–123 (GVLYVGHLPR…RIIKCHVIPP (79 aa)) constitute an RRM domain. The tract at residues 234–269 (DEIVIKVKPLPENSDDVEESEEESAEEDEGEEEEAA) is disordered. Residues 246 to 269 (NSDDVEESEEESAEEDEGEEEEAA) show a composition bias toward acidic residues.

It is found in the nucleus. The protein localises to the nucleolus. In terms of biological role, plays an essential role in early embryonic development. The chain is MKI67 FHA domain-interacting nucleolar phosphoprotein (nifk) from Danio rerio (Zebrafish).